Consider the following 218-residue polypeptide: Small ribosomal subunit protein uS3 (218 aa).

Residues 38-106 (IRTFLKKKLY…KLVVDIKEVK (69 aa)) enclose the KH type-2 domain.

The protein belongs to the universal ribosomal protein uS3 family. In terms of assembly, part of the 30S ribosomal subunit. Forms a tight complex with proteins S10 and S14.

Binds the lower part of the 30S subunit head. Binds mRNA in the 70S ribosome, positioning it for translation. The sequence is that of Small ribosomal subunit protein uS3 from Agathobacter rectalis (strain ATCC 33656 / DSM 3377 / JCM 17463 / KCTC 5835 / VPI 0990) (Eubacterium rectale).